Consider the following 454-residue polypeptide: T-box protein VegT (454 aa).

The T-box DNA-binding region spans 57–230 (LWSQFHQEGT…HNPFAKGFRE (174 aa)). Residues 229–241 (REQERSHKRDDVL) show a composition bias toward basic and acidic residues. Disordered regions lie at residues 229–274 (REQE…ATRV) and 295–358 (ANQG…VPDS). The span at 308–325 (GVNQEQQVPTSSLNFYNK) shows a compositional bias: polar residues.

In terms of assembly, forms a repression complex on the promoters of the nodal/nr1 and siamois genes with the maternal factors tcf7l1/tcf3 and pouf5.1/oct-25. Interacts (via C-terminus) with tcf7l1/tcf3 (via N-terminus). Also interacts with the other POU-domain transcription factors pou5f1.2/oct-91 and pou5f1.3/oct-60.

The protein resides in the nucleus. In terms of biological role, transcription factor required for both mesoderm and endoderm formation in the embryo; signaling determinants and concentration levels may determine which germ layer is formed. Acts together with beta-catenin to activate genes that are responsible for mesoderm induction including wnt-8, eomes t/bra, siamois, mix1 and sox17. Directly binds to promoter DNA. Patterns the mesoderm along the dorsoventral and posterior axis. Activates siamois gene transcription when alone or in combination with beta-catenin, but inhibits siamois transcription in combination with pou5f1.1/oct-25. The chain is T-box protein VegT from Xenopus borealis (Kenyan clawed frog).